A 133-amino-acid chain; its full sequence is Large ribosomal subunit protein bL20 (133 aa).

It belongs to the bacterial ribosomal protein bL20 family.

Its function is as follows. Binds directly to 23S ribosomal RNA and is necessary for the in vitro assembly process of the 50S ribosomal subunit. It is not involved in the protein synthesizing functions of that subunit. The protein is Large ribosomal subunit protein bL20 of Bartonella henselae (strain ATCC 49882 / DSM 28221 / CCUG 30454 / Houston 1) (Rochalimaea henselae).